We begin with the raw amino-acid sequence, 432 residues long: Transcriptional adapter 3 (432 aa).

A Glycyl lysine isopeptide (Lys-Gly) (interchain with G-Cter in SUMO2) cross-link involves residue Lys-21. Positions 40 to 69 form a coiled coil; the sequence is IEELDTLQLELETLLSSASRRLRVLEAETQ. The tract at residues 87–127 is disordered; sequence GRDHELGAPPKHGKPKKQKLEGKAGHGPGPGPGRPKSKNLQ. Residue Lys-129 forms a Glycyl lysine isopeptide (Lys-Gly) (interchain with G-Cter in SUMO2) linkage. 2 stretches are compositionally biased toward basic and acidic residues: residues 211–223 and 232–251; these read DGAR…DKKK and LDTK…HEQP. Disordered stretches follow at residues 211 to 257 and 271 to 319; these read DGAR…GCPF and ENII…SRIK. Phosphoserine is present on residues Ser-280 and Ser-298. The span at 295–305 shows a compositional bias: polar residues; the sequence is ASTSPRNQNKP. The stretch at 367-407 forms a coiled coil; that stretch reads LLRLAKEEVSRQELRQRVRMADNEVMDAFRKIMAARQKKRT. Lys-418 is modified (N6-acetyllysine).

The protein belongs to the NGG1 family. In terms of assembly, the PCAF complex is composed of a number of TBP-associated factors (TAFS), such as TAF5, TAF5L, TAF6, TAF6L, TAF9, TAF10 and TAF12, PCAF, and also PCAF-associated factors (PAFs), such as TADA2L/ADA2, TADA3L/ADA3 and SPT3. Interacts directly with TADA2L and PCAF and also with the high-risk HPV oncoprotein E6. Component of the STAGA transcription coactivator-HAT complex, at least composed of SUPT3H, GCN5L2, TAF5L, TAF6L, SUPT7L, TADA3L, TAD1L, TAF10, TAF12, TRRAP and TAF9. Component of the TFTC-HAT complex. Component of the ADA2A-containing complex (ATAC), composed of KAT14, KAT2A, TADA2L, TADA3L, ZZ3, MBIP, WDR5, YEATS2, CCDC101 and DR1.

It is found in the nucleus. Its function is as follows. Functions as a component of the PCAF complex. The PCAF complex is capable of efficiently acetylating histones in a nucleosomal context. The PCAF complex could be considered as the human version of the yeast SAGA complex. Also known as a coactivator for p53/TP53-dependent transcriptional activation. Component of the ATAC complex, a complex with histone acetyltransferase activity on histones H3 and H4. The chain is Transcriptional adapter 3 (TADA3) from Pongo abelii (Sumatran orangutan).